A 422-amino-acid polypeptide reads, in one-letter code: Probable zinc-type alcohol dehydrogenase-like protein L498 (422 aa).

Positions 108, 129, 160, 163, 166, 174, and 231 each coordinate Zn(2+).

Zn(2+) serves as cofactor.

The protein localises to the host cytoplasm. Its subcellular location is the virion. The chain is Probable zinc-type alcohol dehydrogenase-like protein L498 from Acanthamoeba polyphaga (Amoeba).